The sequence spans 535 residues: Bifunctional purine biosynthesis protein PurH (535 aa).

The MGS-like domain maps to 6–151 (TRLPIRRALI…KNHKDVAIVV (146 aa)).

This sequence belongs to the PurH family.

It carries out the reaction (6R)-10-formyltetrahydrofolate + 5-amino-1-(5-phospho-beta-D-ribosyl)imidazole-4-carboxamide = 5-formamido-1-(5-phospho-D-ribosyl)imidazole-4-carboxamide + (6S)-5,6,7,8-tetrahydrofolate. The catalysed reaction is IMP + H2O = 5-formamido-1-(5-phospho-D-ribosyl)imidazole-4-carboxamide. It functions in the pathway purine metabolism; IMP biosynthesis via de novo pathway; 5-formamido-1-(5-phospho-D-ribosyl)imidazole-4-carboxamide from 5-amino-1-(5-phospho-D-ribosyl)imidazole-4-carboxamide (10-formyl THF route): step 1/1. The protein operates within purine metabolism; IMP biosynthesis via de novo pathway; IMP from 5-formamido-1-(5-phospho-D-ribosyl)imidazole-4-carboxamide: step 1/1. This is Bifunctional purine biosynthesis protein PurH from Pseudomonas paraeruginosa (strain DSM 24068 / PA7) (Pseudomonas aeruginosa (strain PA7)).